Consider the following 843-residue polypeptide: Probable inorganic carbon transporter subunit DabA 2 (843 aa).

Zn(2+) is bound by residues Cys-352, Asp-354, His-536, and Cys-551.

The protein belongs to the inorganic carbon transporter (TC 9.A.2) DabA family. Forms a complex with DabB. Requires Zn(2+) as cofactor.

The protein resides in the cell inner membrane. Part of an energy-coupled inorganic carbon pump. The chain is Probable inorganic carbon transporter subunit DabA 2 from Bradyrhizobium sp. (strain BTAi1 / ATCC BAA-1182).